Consider the following 461-residue polypeptide: Coagulation factor IX (461 aa).

Residues 1 to 28 (MQRVNMIMAESPGLITICLLGYLLSAEC) form the signal peptide. The propeptide occupies 29–46 (TVFLDHENANKILNRPKR). Ca(2+) is bound by residues Tyr-47, Asn-48, Glu-53, Glu-54, Glu-61, Glu-63, Glu-66, Glu-67, Glu-72, Glu-73, and Glu-76. Positions 47 to 92 (YNSGKLEEFVQGNLERECMEEKCSFEEAREVFENTERTTEFWKQYV) constitute a Gla domain. A 4-carboxyglutamate mark is found at Glu-53, Glu-54, Glu-61, Glu-63, Glu-66, Glu-67, Glu-72, Glu-73, Glu-76, Glu-79, and Glu-82. Mg(2+) is bound at residue Glu-61. A disulfide bond links Cys-64 and Cys-69. Mg(2+) is bound at residue Glu-66. Glu-72 contacts Mg(2+). Residue Glu-76 coordinates Mg(2+). A Ca(2+)-binding site is contributed by Glu-82. Glu-82 serves as a coordination point for Mg(2+). Thr-85 carries O-linked (GalNAc...) threonine glycosylation. Glu-86, Asp-93, Gly-94, and Gln-96 together coordinate Ca(2+). Glu-86 is subject to 4-carboxyglutamate. Glu-86 contacts Mg(2+). The region spanning 93–129 (DGDQCESNPCLNGGSCKDDINSYECWCPFGFEGKNCE) is the EGF-like 1; calcium-binding domain. Disulfide bonds link Cys-97–Cys-108, Cys-102–Cys-117, Cys-119–Cys-128, Cys-134–Cys-145, Cys-141–Cys-155, Cys-157–Cys-170, Cys-178–Cys-335, Cys-252–Cys-268, Cys-382–Cys-396, and Cys-407–Cys-435. Residue Ser-99 is glycosylated (O-linked (Glc...) serine). O-linked (Fuc...) serine glycosylation occurs at Ser-107. Ca(2+) is bound by residues Asp-110 and Asp-111. Asp-110 is modified ((3R)-3-hydroxyaspartate). The residue at position 114 (Ser-114) is a Phosphoserine. One can recognise an EGF-like 2 domain in the interval 130-171 (LDVTCNIKNGRCEQFCKNSADNKVVCSCTEGYRLAENQKSCE). A propeptide spans 192 to 226 (AETVFPDVDYVNSTEAETILDNITQSTQSFNDFTR) (activation peptide). Tyr-201 bears the Sulfotyrosine mark. At Ser-204 the chain carries Phosphoserine. Thr-205 carries the phosphothreonine; alternate modification. Residue Thr-205 is glycosylated (O-linked (GalNAc...) threonine; alternate). Asn-213 carries an N-linked (GlcNAc...) asparagine glycan. O-linked (GalNAc...) threonine glycans are attached at residues Thr-215 and Thr-225. In terms of domain architecture, Peptidase S1 spans 227–459 (VVGGEDAKPG…YVNWIKEKTK (233 aa)). His-267 functions as the Charge relay system in the catalytic mechanism. Ca(2+) is bound by residues Glu-281, Asn-283, Glu-286, Glu-288, and Glu-291. Residue Asp-315 is the Charge relay system of the active site. The active-site Charge relay system is Ser-411.

Belongs to the peptidase S1 family. In terms of assembly, heterodimer of a light chain and a heavy chain; disulfide-linked. Interacts (inactive and activated) with F11 (activated) in calcium-dependent manner. Interacts with SERPINC1. In terms of processing, activated by factor XIa, which excises the activation peptide. The propeptide can also be removed by snake venom protease. Post-translationally, the iron and 2-oxoglutarate dependent 3-hydroxylation of aspartate and asparagine is (R) stereospecific within EGF domains. Activated by coagulation factor VIIa-tissue factor (F7-F3) complex in calcium-dependent manner. Predominantly O-glucosylated at Ser-99 by POGLUT1 in vitro.

Its subcellular location is the secreted. It catalyses the reaction Selective cleavage of Arg-|-Ile bond in factor X to form factor Xa.. Functionally, factor IX is a vitamin K-dependent plasma protein that participates in the intrinsic pathway of blood coagulation by converting factor X to its active form in the presence of Ca(2+) ions, phospholipids, and factor VIIIa. In Pan troglodytes (Chimpanzee), this protein is Coagulation factor IX (F9).